Consider the following 284-residue polypeptide: Shikimate dehydrogenase (NADP(+)) (284 aa).

Shikimate contacts are provided by residues Ser20–Ser22 and Ser67. Lys71 acts as the Proton acceptor in catalysis. Asp83 serves as a coordination point for NADP(+). Shikimate contacts are provided by Asn92 and Asp107. NADP(+)-binding positions include Gly129–Ala133 and Ile227. Tyr229 contributes to the shikimate binding site. An NADP(+)-binding site is contributed by Gly250.

This sequence belongs to the shikimate dehydrogenase family. As to quaternary structure, homodimer.

The enzyme catalyses shikimate + NADP(+) = 3-dehydroshikimate + NADPH + H(+). It functions in the pathway metabolic intermediate biosynthesis; chorismate biosynthesis; chorismate from D-erythrose 4-phosphate and phosphoenolpyruvate: step 4/7. In terms of biological role, involved in the biosynthesis of the chorismate, which leads to the biosynthesis of aromatic amino acids. Catalyzes the reversible NADPH linked reduction of 3-dehydroshikimate (DHSA) to yield shikimate (SA). The protein is Shikimate dehydrogenase (NADP(+)) of Streptococcus pneumoniae serotype 2 (strain D39 / NCTC 7466).